The chain runs to 341 residues: Dihydroorotate dehydrogenase (quinone) (341 aa).

Residues 59–63 (AGLDK) and T83 contribute to the FMN site. Residue K63 coordinates substrate. 108 to 112 (NRMGF) provides a ligand contact to substrate. The FMN site is built by N136 and N169. A substrate-binding site is contributed by N169. The active-site Nucleophile is S172. Position 174 (N174) interacts with substrate. K214 and T242 together coordinate FMN. 243–244 (NT) is a substrate binding site. Residues G265, G294, and 315-316 (YS) each bind FMN.

It belongs to the dihydroorotate dehydrogenase family. Type 2 subfamily. Monomer. FMN is required as a cofactor.

Its subcellular location is the cell membrane. The catalysed reaction is (S)-dihydroorotate + a quinone = orotate + a quinol. It functions in the pathway pyrimidine metabolism; UMP biosynthesis via de novo pathway; orotate from (S)-dihydroorotate (quinone route): step 1/1. Its function is as follows. Catalyzes the conversion of dihydroorotate to orotate with quinone as electron acceptor. In Neisseria meningitidis serogroup C (strain 053442), this protein is Dihydroorotate dehydrogenase (quinone).